A 224-amino-acid chain; its full sequence is 7-cyano-7-deazaguanine synthase (224 aa).

Ile-9–Ala-19 is a binding site for ATP. The Zn(2+) site is built by Cys-190, Cys-198, Cys-201, and Cys-204.

The protein belongs to the QueC family. Zn(2+) is required as a cofactor.

The catalysed reaction is 7-carboxy-7-deazaguanine + NH4(+) + ATP = 7-cyano-7-deazaguanine + ADP + phosphate + H2O + H(+). It functions in the pathway purine metabolism; 7-cyano-7-deazaguanine biosynthesis. Functionally, catalyzes the ATP-dependent conversion of 7-carboxy-7-deazaguanine (CDG) to 7-cyano-7-deazaguanine (preQ(0)). In Campylobacter jejuni subsp. doylei (strain ATCC BAA-1458 / RM4099 / 269.97), this protein is 7-cyano-7-deazaguanine synthase.